The chain runs to 398 residues: 8-amino-7-oxononanoate synthase (398 aa).

Arginine 23 provides a ligand contact to substrate. Pyridoxal 5'-phosphate is bound at residue 110–111; sequence GY. Histidine 135 serves as a coordination point for substrate. Serine 181, histidine 209, and threonine 237 together coordinate pyridoxal 5'-phosphate. Lysine 240 bears the N6-(pyridoxal phosphate)lysine mark. Threonine 354 is a binding site for substrate.

The protein belongs to the class-II pyridoxal-phosphate-dependent aminotransferase family. BioF subfamily. Homodimer. The cofactor is pyridoxal 5'-phosphate.

The catalysed reaction is 6-carboxyhexanoyl-[ACP] + L-alanine + H(+) = (8S)-8-amino-7-oxononanoate + holo-[ACP] + CO2. It functions in the pathway cofactor biosynthesis; biotin biosynthesis. Its function is as follows. Catalyzes the decarboxylative condensation of pimeloyl-[acyl-carrier protein] and L-alanine to produce 8-amino-7-oxononanoate (AON), [acyl-carrier protein], and carbon dioxide. The chain is 8-amino-7-oxononanoate synthase from Anaeromyxobacter dehalogenans (strain 2CP-1 / ATCC BAA-258).